The primary structure comprises 494 residues: Sulfate adenylyltransferase subunit 1 (494 aa).

A tr-type G domain is found at 24–240; it reads TRPLRLITCG…LELATVRSAQ (217 aa). Residues 33–40 are G1; it reads GSVDDGKS. A GTP-binding site is contributed by 33 to 40; that stretch reads GSVDDGKS. The tract at residues 91-95 is G2; sequence GITID. Residues 112–115 are G3; sequence DTPG. Residues 112-116 and 167-170 contribute to the GTP site; these read DTPGH and NKID. The interval 167-170 is G4; it reads NKID. The segment at 204-206 is G5; the sequence is SAL.

This sequence belongs to the TRAFAC class translation factor GTPase superfamily. Classic translation factor GTPase family. CysN/NodQ subfamily. As to quaternary structure, heterodimer composed of CysD, the smaller subunit, and CysN.

The enzyme catalyses sulfate + ATP + H(+) = adenosine 5'-phosphosulfate + diphosphate. It functions in the pathway sulfur metabolism; hydrogen sulfide biosynthesis; sulfite from sulfate: step 1/3. In terms of biological role, with CysD forms the ATP sulfurylase (ATPS) that catalyzes the adenylation of sulfate producing adenosine 5'-phosphosulfate (APS) and diphosphate, the first enzymatic step in sulfur assimilation pathway. APS synthesis involves the formation of a high-energy phosphoric-sulfuric acid anhydride bond driven by GTP hydrolysis by CysN coupled to ATP hydrolysis by CysD. This is Sulfate adenylyltransferase subunit 1 from Rhizobium rhizogenes (strain K84 / ATCC BAA-868) (Agrobacterium radiobacter).